Reading from the N-terminus, the 728-residue chain is Polyribonucleotide nucleotidyltransferase (728 aa).

Asp-509 and Asp-515 together coordinate Mg(2+). One can recognise a KH domain in the interval Thr-576–Ile-638. Residues Gly-648 to Lys-715 enclose the S1 motif domain.

Belongs to the polyribonucleotide nucleotidyltransferase family. Mg(2+) serves as cofactor.

The protein resides in the cytoplasm. The enzyme catalyses RNA(n+1) + phosphate = RNA(n) + a ribonucleoside 5'-diphosphate. Functionally, involved in mRNA degradation. Catalyzes the phosphorolysis of single-stranded polyribonucleotides processively in the 3'- to 5'-direction. The protein is Polyribonucleotide nucleotidyltransferase of Karelsulcia muelleri (strain GWSS) (Sulcia muelleri).